The following is a 529-amino-acid chain: Mannuronan C5-epimerase (529 aa).

Residues 1–30 (MGACAMNPQALKGSAMLAAAMLLASGAAMA) form the signal peptide. 6 PbH1 repeats span residues 229–256 (GTET…SISQ), 291–313 (TTGF…DPHD), 315–338 (SHGL…IISR), 340–362 (VNDS…VLDR), 364–386 (SVNN…TLYE), and 387–409 (SGDN…RVRN). The active-site Proton acceptor is His-312.

This sequence belongs to the D-mannuronate C5-epimerase family.

The protein resides in the periplasm. It catalyses the reaction [(1-&gt;4)-beta-D-mannuronosyl](n) = [alginate](n). It functions in the pathway glycan biosynthesis; alginate biosynthesis. Functionally, catalyzes the epimerization of beta-D-mannuronate to alpha-L-guluronate during the synthesis of the linear polysaccharide alginate. In addition, is part of a periplasmic protein complex that protects alginate from degradation by AlgL by channeling the newly formed alginate polymer through a scaffold that transfers the alginate polymer through the periplasmic space to the outer membrane secretin AlgE. The sequence is that of Mannuronan C5-epimerase from Pseudomonas fluorescens.